A 58-amino-acid chain; its full sequence is uncharacterized protein (58 aa).

Residues 3–52 adopt a coiled-coil conformation; sequence KVILEHLQRIEKQLEILNSKIENFLGFEELSEEELKELDEIEAKMEKGEK.

This is an uncharacterized protein from Archaeoglobus fulgidus (strain ATCC 49558 / DSM 4304 / JCM 9628 / NBRC 100126 / VC-16).